The sequence spans 320 residues: o-succinylbenzoate synthase (320 aa).

Lysine 133 acts as the Proton donor in catalysis. Positions 161, 190, and 213 each coordinate Mg(2+). Lysine 235 functions as the Proton acceptor in the catalytic mechanism.

Belongs to the mandelate racemase/muconate lactonizing enzyme family. MenC type 1 subfamily. Requires a divalent metal cation as cofactor.

The catalysed reaction is (1R,6R)-6-hydroxy-2-succinyl-cyclohexa-2,4-diene-1-carboxylate = 2-succinylbenzoate + H2O. It functions in the pathway quinol/quinone metabolism; 1,4-dihydroxy-2-naphthoate biosynthesis; 1,4-dihydroxy-2-naphthoate from chorismate: step 4/7. It participates in quinol/quinone metabolism; menaquinone biosynthesis. Its function is as follows. Converts 2-succinyl-6-hydroxy-2,4-cyclohexadiene-1-carboxylate (SHCHC) to 2-succinylbenzoate (OSB). This is o-succinylbenzoate synthase from Escherichia coli (strain K12 / MC4100 / BW2952).